A 397-amino-acid polypeptide reads, in one-letter code: L-aspartate--L-methionine ligase (397 aa).

Residues 131-347 (VALNNKARIP…FFNTILKYVK (217 aa)) enclose the ATP-grasp domain. Positions 136, 171, 173, 183, 186, 188, 215, 216, 218, 223, and 246 each coordinate ADP. Aspartate 288 provides a ligand contact to Mg(2+). Residues leucine 290 and isoleucine 300 each contribute to the ADP site. Aspartate 301 contacts Mg(2+). Arginine 305 serves as the catalytic Critical for catalysis.

Primarily a monomer in solution. Minor homodimer formation. Requires Mg(2+) as cofactor.

It catalyses the reaction L-aspartate + L-methionine + ATP = L-aspartyl-L-methionine + ADP + phosphate + H(+). Its pathway is amino-acid metabolism. L-amino acid ligase, which preferentially catalyzes the formation of L-aspartyl-L-methionine dipeptide from L-aspartate and L-methionine in the presence of ATP. Less active with L-asparagine and L-methionine as substrates. Less active with L-aspartate and either L-phenylalanine, L-valine, L-leucine or L-isoleucine as substrates. Decreased activity when L-methionine is substituted with seleno-DL-methionine, L-homocysteine, L-methionine sulfoxide, L-methionine sulfoximine and o-acetyl-L-serine. Decreased activity with acetylation of L-methionine amino group. Decreased activity by modification of L-methionine carboxylate to L-methionine methyl ester. No activity when L-methionine is substituted with L-homoserine. No activity with formylation of L-methionine amino group. No activity by modification of L-methionine carboxylate to L-methionine-glycine carboxylate. No activity when L-aspartate substrate is replaced by analogs such as L-homoserine, DL-aspartate beta-methyl ester, L-glutamate or o-acetyl-L-serine. No activity when L-aspartate amino and alpha-carboxylate groups are modified to L-malate, glycine-L-aspartate, L-aspartate-glycine or N-carbamoyl-DL-aspartate. No activity with L-methionine or L-aspartate as sole substrates. No activity in presence of other nucleoside triphosphates including GTP, CTP, UTP, TTP or ITP. Involved in sulfur amino acid metabolism. This Staphylococcus aureus (strain NCTC 8325 / PS 47) protein is L-aspartate--L-methionine ligase.